Here is a 375-residue protein sequence, read N- to C-terminus: Serpin B5 (375 aa).

Asn99, Asn133, Asn188, Asn298, and Asn361 each carry an N-linked (GlcNAc...) asparagine glycan.

It belongs to the serpin family. Ov-serpin subfamily. In terms of assembly, interacts with IRF6.

It localises to the secreted. The protein localises to the extracellular space. Tumor suppressor. It blocks the growth, invasion, and metastatic properties of mammary tumors. As it does not undergo the S (stressed) to R (relaxed) conformational transition characteristic of active serpins, it exhibits no serine protease inhibitory activity. The sequence is that of Serpin B5 (Serpinb5) from Rattus norvegicus (Rat).